Here is a 98-residue protein sequence, read N- to C-terminus: NADH-ubiquinone oxidoreductase chain 4L (98 aa).

3 helical membrane-spanning segments follow: residues 1 to 21 (MSMVYFNIFMAFTVSFVGLLM), 29 to 49 (SLLCLEGMMLSLFVMMSMTIL), and 61 to 81 (IILLVFAACEAALGLSLLVMV).

Belongs to the complex I subunit 4L family. As to quaternary structure, core subunit of respiratory chain NADH dehydrogenase (Complex I) which is composed of 45 different subunits.

The protein resides in the mitochondrion inner membrane. It catalyses the reaction a ubiquinone + NADH + 5 H(+)(in) = a ubiquinol + NAD(+) + 4 H(+)(out). Core subunit of the mitochondrial membrane respiratory chain NADH dehydrogenase (Complex I) which catalyzes electron transfer from NADH through the respiratory chain, using ubiquinone as an electron acceptor. Part of the enzyme membrane arm which is embedded in the lipid bilayer and involved in proton translocation. This is NADH-ubiquinone oxidoreductase chain 4L (MT-ND4L) from Arctocephalus australis (South American fur seal).